The following is an 89-amino-acid chain: Dynein light chain 2, cytoplasmic (89 aa).

It belongs to the dynein light chain family.

It localises to the cytoplasm. The protein resides in the cytoskeleton. Its function is as follows. Acts as a non-catalytic accessory component of a dynein complex. The sequence is that of Dynein light chain 2, cytoplasmic (Cdlc2) from Drosophila melanogaster (Fruit fly).